Reading from the N-terminus, the 386-residue chain is Terpene cyclase 6 (386 aa).

Mg(2+)-binding residues include Asp-128, Asn-276, and Ser-280. A D(D/E)XX(D/E) motif motif is present at residues 128-132 (DDEID). An NSE motif motif is present at residues 276-284 (NEILSLQKE). The WxxxxxRY motif signature appears at 360–367 (WSYNCERY). 2 residues coordinate (2E,6E)-farnesyl diphosphate: Arg-366 and Tyr-367.

It belongs to the terpene synthase family. In terms of assembly, homodimer. Mg(2+) serves as cofactor.

The enzyme catalyses (2E,6E)-farnesyl diphosphate + H2O = trichobrasilenol + diphosphate. It carries out the reaction (2E,6E)-farnesyl diphosphate = alpha-humulene + diphosphate. It catalyses the reaction (2E,6E)-farnesyl diphosphate = (-)-(E)-beta-caryophyllene + diphosphate. The catalysed reaction is (2E,6E)-farnesyl diphosphate = (E)-2-epi-beta-caryophyllene + diphosphate. The enzyme catalyses (2E,6E)-farnesyl diphosphate + H2O = (+)-isoafricanol + diphosphate. It carries out the reaction (2E,6E)-farnesyl diphosphate + H2O = (+)-(2S,3R,9R)-pristinol + diphosphate. It catalyses the reaction (2E,6E)-farnesyl diphosphate = african-3-ene + diphosphate. The catalysed reaction is (2E,6E)-farnesyl diphosphate = african-1-ene + diphosphate. It participates in sesquiterpene biosynthesis. Terpene cyclase that is able to convert FPP into a mixture of sesquiterpene hydrocarbons and alcohols. The main product is trichobrasilenol. Additionally, side products include alpha-humulene, caryophyllene, 2-epi-caryophyllene, african-3-ene, african-1-ene, isoafricanol and pristinol. Does not accept GPP, GGPP, and GFPP as substrates. This is Terpene cyclase 6 from Hypocrea atroviridis (Trichoderma atroviride).